A 419-amino-acid polypeptide reads, in one-letter code: Probable serine/threonine-protein kinase DDB_G0290859 (419 aa).

Residues 40-387 (YDIISTIGSG…ASTIKKHPFF (348 aa)) enclose the Protein kinase domain. Residues 46–54 (IGSGSYGEV) and Lys-69 each bind ATP. The Proton acceptor role is filled by Asp-173. One can recognise an AGC-kinase C-terminal domain in the interval 388 to 419 (EGINWEEMANFNVEPPFKPTLSSDDDISYFTN).

This sequence belongs to the protein kinase superfamily. AGC Ser/Thr protein kinase family.

The catalysed reaction is L-seryl-[protein] + ATP = O-phospho-L-seryl-[protein] + ADP + H(+). It carries out the reaction L-threonyl-[protein] + ATP = O-phospho-L-threonyl-[protein] + ADP + H(+). In Dictyostelium discoideum (Social amoeba), this protein is Probable serine/threonine-protein kinase DDB_G0290859.